The following is a 399-amino-acid chain: Putative glutamate--cysteine ligase 2 (399 aa).

The interval 377-399 (PAVGSSHGRTDPSRNGGPSHAGA) is disordered.

This sequence belongs to the glutamate--cysteine ligase type 2 family. YbdK subfamily.

It catalyses the reaction L-cysteine + L-glutamate + ATP = gamma-L-glutamyl-L-cysteine + ADP + phosphate + H(+). In terms of biological role, ATP-dependent carboxylate-amine ligase which exhibits weak glutamate--cysteine ligase activity. This chain is Putative glutamate--cysteine ligase 2, found in Thermobifida fusca (strain YX).